Consider the following 257-residue polypeptide: Adenylate kinase (257 aa).

52-57 (GAGKGT) contacts ATP. Positions 72–101 (ATGDMLRSQVAKKTELGKEAKKIMDQGGLV) are NMP. AMP-binding positions include T73, R78, 99–101 (GLV), 128–131 (GFPR), and Q135. Residues 169-206 (GRLVHPASGRSYHKIFNPPKNEMLDDITGEPLIQRSDD) are LID. Residues R170 and 179-180 (SY) contribute to the ATP site. 2 residues coordinate AMP: R203 and R214. Q242 contacts ATP.

Belongs to the adenylate kinase family. AK2 subfamily. Monomer.

The protein localises to the cytoplasm. It is found in the cytosol. It localises to the mitochondrion intermembrane space. It catalyses the reaction AMP + ATP = 2 ADP. Functionally, catalyzes the reversible transfer of the terminal phosphate group between ATP and AMP. Plays an important role in cellular energy homeostasis and in adenine nucleotide metabolism. Adenylate kinase activity is critical for regulation of the phosphate utilization and the AMP de novo biosynthesis pathways. The sequence is that of Adenylate kinase (adk1) from Aspergillus clavatus (strain ATCC 1007 / CBS 513.65 / DSM 816 / NCTC 3887 / NRRL 1 / QM 1276 / 107).